A 308-amino-acid polypeptide reads, in one-letter code: Aspartate carbamoyltransferase catalytic subunit (308 aa).

Arg58 and Thr59 together coordinate carbamoyl phosphate. Residue Lys86 participates in L-aspartate binding. Arg108, His136, and Gln139 together coordinate carbamoyl phosphate. L-aspartate contacts are provided by Arg169 and Arg227. 2 residues coordinate carbamoyl phosphate: Gly268 and Pro269.

Belongs to the aspartate/ornithine carbamoyltransferase superfamily. ATCase family. In terms of assembly, heterododecamer (2C3:3R2) of six catalytic PyrB chains organized as two trimers (C3), and six regulatory PyrI chains organized as three dimers (R2).

It carries out the reaction carbamoyl phosphate + L-aspartate = N-carbamoyl-L-aspartate + phosphate + H(+). It functions in the pathway pyrimidine metabolism; UMP biosynthesis via de novo pathway; (S)-dihydroorotate from bicarbonate: step 2/3. Functionally, catalyzes the condensation of carbamoyl phosphate and aspartate to form carbamoyl aspartate and inorganic phosphate, the committed step in the de novo pyrimidine nucleotide biosynthesis pathway. The polypeptide is Aspartate carbamoyltransferase catalytic subunit (Chloroflexus aurantiacus (strain ATCC 29366 / DSM 635 / J-10-fl)).